The primary structure comprises 515 residues: Leucine-rich repeat transmembrane neuronal protein 2 (515 aa).

Residues 1–33 (MGLHFKWPLGAPMLAAIYAMSVVLKMLPALGMA) form the signal peptide. Residues 34–421 (CPPKCRCEKL…EPDNAIFTQR (388 aa)) lie on the Extracellular side of the membrane. Asn57 carries N-linked (GlcNAc...) asparagine glycosylation. 10 LRR repeats span residues 61-83 (KGSLGLSLRHNHITALERDQFAS), 84-107 (FSQLTWLHLDHNQISTVKEDAFQG), 109-131 (YKLKELILSSNKIFYLPNTTFTQ), 132-155 (LINLQNLDLSFNQLSSLHPELFYG), 156-179 (LRKLQTLHLRSNSLRTIPVRLFWD), 181-203 (RSLEFLDLSTNRLRSLARNGFAG), 205-227 (IKLRELHLEHNQLTKINFAHFLR), 229-251 (SSLHTLFLQWNKISNLTCGMEWT), 252-275 (WSTLEKLDLTGNEIKAIDLTVFET), and 276-299 (MPNLKILLMDNNKLNSLDSKILSS). Asn126 carries N-linked (GlcNAc...) asparagine glycosylation. Residue Asn243 is glycosylated (N-linked (GlcNAc...) asparagine). Residue Asn362 is glycosylated (N-linked (GlcNAc...) asparagine). The chain crosses the membrane as a helical span at residues 422–442 (VITGTMALLFSFFFIIFIVFI). Topologically, residues 443-515 (SRKCCPPTLR…QQLPYKECEV (73 aa)) are cytoplasmic. The Involved in DLG4-binding motif lies at 512–515 (ECEV).

Belongs to the LRRTM family. In terms of assembly, interacts with DLG4. Interacts with neurexin NRXN1; interaction is mediated by heparan sulfate glycan modification on neurexin. Expressed in neuronal tissues. Widely distributed in neuropil regions in discrete puncta throughout the brain (at protein level). Detected in cortex, thalamus, striatum, olfactory bulb, cerebellum and all hippocampal subfields (at protein level). More abundant in deep than in superficial layers of neocortex (at protein level).

It localises to the cell membrane. The protein resides in the postsynaptic cell membrane. Functionally, involved in the development and maintenance of excitatory synapses in the nervous system. Regulates surface expression of AMPA receptors and instructs the development of functional glutamate release sites. Acts as a ligand for the presynaptic receptors NRXN1-A and NRXN1-B. The sequence is that of Leucine-rich repeat transmembrane neuronal protein 2 (Lrrtm2) from Rattus norvegicus (Rat).